Reading from the N-terminus, the 257-residue chain is DNA repair protein RecO (257 aa).

This sequence belongs to the RecO family.

In terms of biological role, involved in DNA repair and RecF pathway recombination. This Streptococcus sanguinis (strain SK36) protein is DNA repair protein RecO.